Here is a 176-residue protein sequence, read N- to C-terminus: Cytochrome b (176 aa).

3 consecutive transmembrane segments (helical) span residues 33–53, 77–98, and 113–133; these read FGSL…FLAM, WLLR…YLHI, and WNVG…GYVL. Residues histidine 83 and histidine 97 each coordinate heme b.

This sequence belongs to the cytochrome b family. In terms of assembly, the cytochrome bc1 complex contains 11 subunits: 3 respiratory subunits (MT-CYB, CYC1 and UQCRFS1), 2 core proteins (UQCRC1 and UQCRC2) and 6 low-molecular weight proteins (UQCRH/QCR6, UQCRB/QCR7, UQCRQ/QCR8, UQCR10/QCR9, UQCR11/QCR10 and a cleavage product of UQCRFS1). This cytochrome bc1 complex then forms a dimer. Heme b is required as a cofactor.

It is found in the mitochondrion inner membrane. Functionally, component of the ubiquinol-cytochrome c reductase complex (complex III or cytochrome b-c1 complex) that is part of the mitochondrial respiratory chain. The b-c1 complex mediates electron transfer from ubiquinol to cytochrome c. Contributes to the generation of a proton gradient across the mitochondrial membrane that is then used for ATP synthesis. This chain is Cytochrome b (MT-CYB), found in Nyctinomops aurispinosus (Peale's free-tailed bat).